Here is a 739-residue protein sequence, read N- to C-terminus: MSEGISLSAEFIDRVKASVKPHWGKLGWVTYKRTYARWLPEKGRSENWDETVKRVVEGNINLDPRLQDSPSLELKQSLTEEAERLYKLIYGLGATPSGRNLWISGTDYQRRTGDSLNNCWFVAIRPQKYGDSKIVPSYLGKQEKAVSMPFSFLFDELMKGGGVGFSVARSNISQIPRVDFAIDLQVVVDESSESYDASVKVGAVGKNELVQDADSIYYRLPDTREGWVLANALLIDLHFAQTNPDRKQKLILDLSDIRPYGAEIHGFGGTASGPMPLISMLLDINEVLNNKAGGRLTSVDAADICNLIGKAVVAGNVRRSAELALGSNDDQDFISMKQDQEKLMHHRWASNNSVAVDSAFSGYQPIAAGIRENGEPGIVNLDLSKNYGRIVDGYQAGIDGDVEGTNPCGEISLANGEPCNLFEVFPLIAEEQGWDLQEVFALAARYAKRVTFSPYDWEISREIIQKNRRIGISMSGIQDWLLTRLGNRVVTGFKDDFDPETHEAIKVPVYDKRAIKMVDQLYKAVVKADQDYSKTLGCNESIKHTTVKPSGTVAKLAGASEGMHFHYGAYLIQRIRFQNSDPLLPALKACGYRTEADIYTENTTCVEFPVKAVGADNPNFASAGTVSIAEQFATQAFLQTYWSDNAVSCTITFQDSEGDQVESLLRQYRFIIKSTSLLPYFGGSLQQAPKEPIDKETYEKRSQEITGNVEEVFSQLNSDVKDLELVDQTDCEGGACPIK.

Cysteine 119 and cysteine 419 form a disulfide bridge. Residues 147–158 (SMPFSFLFDELM) are effector region-1. The tract at residues 168–313 (ARSNISQIPR…ICNLIGKAVV (146 aa)) is effector region-2. Active-site residues include cysteine 408 and glutamate 410. Residues 565 to 626 (FHYGAYLIQR…NPNFASAGTV (62 aa)) form an adenosylcobalamin-binding-1 region. An adenosylcobalamin-binding-2 region spans residues 685–724 (LQQAPKEPIDKETYEKRSQEITGNVEEVFSQLNSDVKDLE).

It belongs to the class II ribonucleoside-triphosphate reductase family. As to quaternary structure, monomer. It depends on adenosylcob(III)alamin as a cofactor.

The catalysed reaction is a 2'-deoxyribonucleoside 5'-triphosphate + [thioredoxin]-disulfide + H2O = a ribonucleoside 5'-triphosphate + [thioredoxin]-dithiol. Allosterically regulated by ATP and dNTP. The sequence is that of Adenosylcobalamin-dependent ribonucleoside-triphosphate reductase (rtpR) from Lactobacillus delbrueckii subsp. bulgaricus (strain ATCC 11842 / DSM 20081 / BCRC 10696 / JCM 1002 / NBRC 13953 / NCIMB 11778 / NCTC 12712 / WDCM 00102 / Lb 14).